A 258-amino-acid chain; its full sequence is Countin-1 (258 aa).

The N-terminal stretch at 1 to 21 (MNKLFSLILALFLVNSAVVSS) is a signal peptide. Residues 22 to 106 (LDSCSICVDF…EKISVCKTND (85 aa)) form the Saposin B-type domain. 3 disulfide bridges follow: Cys-25/Cys-102, Cys-28/Cys-96, and Cys-56/Cys-69. Residues Asn-121 and Asn-215 are each glycosylated (N-linked (GlcNAc...) asparagine). The span at 233–248 (AGSFSGSSQSTQTGAA) shows a compositional bias: low complexity. The tract at residues 233–258 (AGSFSGSSQSTQTGAASGSGSGFALF) is disordered. The span at 249–258 (SGSGSGFALF) shows a compositional bias: gly residues.

Belongs to the countin family. As to quaternary structure, component of the counting factor (CF) complex, which includes cf60, cf50, cf45-1 and ctnA.

The protein resides in the secreted. Its function is as follows. Cell-counting factor that limits the maximum size of the multicellular structure. May down-regulate the expression of gp24, which mediates cell adhesion. The sequence is that of Countin-1 (ctnA) from Dictyostelium discoideum (Social amoeba).